The chain runs to 421 residues: Histidine--tRNA ligase (421 aa).

The protein belongs to the class-II aminoacyl-tRNA synthetase family. Homodimer.

The protein resides in the cytoplasm. It carries out the reaction tRNA(His) + L-histidine + ATP = L-histidyl-tRNA(His) + AMP + diphosphate + H(+). The protein is Histidine--tRNA ligase of Nitrosomonas eutropha (strain DSM 101675 / C91 / Nm57).